We begin with the raw amino-acid sequence, 393 residues long: Autophagy-related protein 18c (393 aa).

WD repeat units follow at residues 27 to 65 (KEEAELVSVCWNQDSSCFAAGTSHGFRIYNCEPFKETFR), 70 to 114 (DGGF…CISE), 199 to 239 (AHDS…RLQE), and 244 to 283 (VDRADIYSIALSPNVQWLAVSSDKGTVHIFSLRVRVVGED).

It belongs to the WD repeat PROPPIN family. In terms of assembly, component of the PI(3,5)P2 regulatory complex at least composed of ATG18, SAC/FIG4, FAB1 and VAC14. In terms of tissue distribution, expressed in roots, stems, flowers and leaves.

It localises to the preautophagosomal structure membrane. The protein resides in the vacuole membrane. Functionally, the PI(3,5)P2 regulatory complex regulates both the synthesis and turnover of phosphatidylinositol 3,5-bisphosphate (PtdIns(3,5)P2). Required for autophagy. This chain is Autophagy-related protein 18c (ATG18C), found in Arabidopsis thaliana (Mouse-ear cress).